The chain runs to 470 residues: 6-phosphofructo-2-kinase/fructose-2,6-bisphosphatase (470 aa).

Residues 1–249 (MADRLRELTQ…VYYLMNIHVT (249 aa)) are 6-phosphofructo-2-kinase. S31 bears the Phosphoserine; by PKA mark. 47 to 55 (GLPARGKTY) contributes to the ATP binding site. Residues R80 and R104 each contribute to the beta-D-fructose 6-phosphate site. Residue D130 is part of the active site. Positions 132 and 138 each coordinate beta-D-fructose 6-phosphate. C160 is a catalytic residue. 169–174 (NITQVK) is a binding site for ATP. The beta-D-fructose 6-phosphate site is built by K174, R195, and Y199. The interval 250 to 470 (PRSIYLSRHG…EALDTVPEHF (221 aa)) is fructose-2,6-bisphosphatase. Residue R257 coordinates beta-D-fructose 2,6-bisphosphate. H258 acts as the Tele-phosphohistidine intermediate in catalysis. The beta-D-fructose 2,6-bisphosphate site is built by N264 and G270. E327 functions as the Proton donor/acceptor in the catalytic mechanism. Positions 338, 352, 356, 367, 393, and 397 each coordinate beta-D-fructose 2,6-bisphosphate. Residue 349–352 (FALR) coordinates ATP. Residues 393-397 (QAVMR) and Y429 each bind ATP.

In the C-terminal section; belongs to the phosphoglycerate mutase family. As to quaternary structure, homodimer.

The catalysed reaction is beta-D-fructose 2,6-bisphosphate + H2O = beta-D-fructose 6-phosphate + phosphate. It carries out the reaction beta-D-fructose 6-phosphate + ATP = beta-D-fructose 2,6-bisphosphate + ADP + H(+). With respect to regulation, phosphorylation results in inhibition of the kinase activity. In terms of biological role, synthesis and degradation of fructose 2,6-bisphosphate. The protein is 6-phosphofructo-2-kinase/fructose-2,6-bisphosphatase of Aquarana catesbeiana (American bullfrog).